Here is a 182-residue protein sequence, read N- to C-terminus: ATP synthase subunit delta, mitochondrial (182 aa).

The N-terminal 17 residues, 1–17 (MFRTFGRRLVSCTLPLL), are a transit peptide targeting the mitochondrion.

Belongs to the ATPase epsilon chain family. As to quaternary structure, F-type ATPases have 2 components, F(1) - the catalytic core - and F(o) - the membrane proton channel. F(1) has five subunits: alpha(3), beta(3), gamma(1), delta(1), epsilon(1), plus the additional subunit P18 (Tb427.05.1710) that is not present in F(1)F(o) ATP synthase from metazoa. Subunit P18 (Tb927.5.1710) interacts with the alpha subunit with a 1:1 stoichiometry; the interaction is direct. Subunit gamma is part of the central stalk. F(o) has three main subunits: a, b and c. The trypanosomal ATPase complex contains additional subunits that are not present in the F(1)F(o) ATP synthase from metazoa.

It is found in the mitochondrion. The protein localises to the mitochondrion inner membrane. Its function is as follows. Mitochondrial membrane ATP synthase (F(1)F(o) ATP synthase) produces ATP from ADP in the presence of a proton gradient across the membrane which is generated by electron transport complexes of the respiratory chain. F-type ATPases consist of two structural domains, F(1) - containing the extramembraneous catalytic core, and F(o) - containing the membrane proton channel, linked together by a central stalk and a peripheral stalk. During catalysis, ATP synthesis in the catalytic domain of F(1) is coupled via a rotary mechanism of the central stalk subunits to proton translocation. Subunits alpha and beta form the catalytic core in F(1). Rotation of the central stalk against the surrounding alpha(3)beta(3) subunits leads to hydrolysis of ATP in three separate catalytic sites on the beta subunits. Contrary to the procyclic, insect form that requires F(1)F(o) ATP synthase for ATP synthesis, the bloodstream form relies on ATP hydrolysis by F(1)F(o) ATP synthase to maintain its mitochondrial membrane potential. The sequence is that of ATP synthase subunit delta, mitochondrial from Trypanosoma brucei brucei.